Consider the following 1177-residue polypeptide: Solute carrier family 9 member C1 (1177 aa).

Residues 1–17 are Extracellular-facing; it reads MAGIFKEFFFSTEDLPE. A helical membrane pass occupies residues 18-37; it reads VILTLSLISSIGAFLNRHLE. The Cytoplasmic portion of the chain corresponds to 38–42; it reads DFPIP. A helical transmembrane segment spans residues 43 to 60; sequence VPVILFLLGCSFEVLSFT. Residues 61–76 lie on the Extracellular side of the membrane; the sequence is SSQVQRYANAIQWMSP. The helical transmembrane segment at 77–93 threads the bilayer; sequence DLFFRIFTPVVFFTTAF. The Cytoplasmic segment spans residues 94 to 103; that stretch reads DMDTYMLQKL. Residues 104 to 129 form a helical membrane-spanning segment; it reads FWQILLISIPGFLVNYILVLWHLASV. The segment at 104-191 is transport core domain; that stretch reads FWQILLISIP…SLITFTSIMD (88 aa). The Extracellular segment spans residues 130 to 135; that stretch reads NQLLLK. A helical transmembrane segment spans residues 136 to 161; sequence PTQWLLFSAILVSSDPMLTAAAIRDL. Residues 162–164 are Cytoplasmic-facing; the sequence is GLS. Residues 165-190 form a helical membrane-spanning segment; it reads RSLISLINGESLMTSVISLITFTSIM. Residues 191–204 lie on the Extracellular side of the membrane; it reads DFDQRLQSKRNHTL. The chain crosses the membrane as a helical span at residues 205–236; sequence AEEIVGGICSYIIASFLFGILSSKLIQFWMST. The Cytoplasmic segment spans residues 237 to 240; that stretch reads VFGD. The chain crosses the membrane as a helical span at residues 241–262; it reads DVNHISLIFSILYLIFYICELV. The Extracellular portion of the chain corresponds to 263–265; it reads GMS. The helical transmembrane segment at 266–279 threads the bilayer; that stretch reads GIFTLAIVGLLLNS. Topologically, residues 280–286 are cytoplasmic; the sequence is TSFKAAI. A helical membrane pass occupies residues 287-319; sequence EETLLLEFWTFLSRIAFLMVFTFFGLLIPAHTY. Topologically, residues 320–324 are extracellular; sequence LYIEF. Residues 325-354 form a helical membrane-spanning segment; that stretch reads VDIYYSLNIYLTLIVLRFLTLLLISPVLSR. The tract at residues 325–426 is transport core domain; sequence VDIYYSLNIY…FILPVAVTIL (102 aa). Residues 355 to 360 lie on the Cytoplasmic side of the membrane; it reads VGHEFS. The chain crosses the membrane as a helical span at residues 361-391; sequence WRWIFIMVCSEMKGMPNINMALLLAYSDLYF. The Extracellular portion of the chain corresponds to 392-395; that stretch reads GSDK. A helical transmembrane segment spans residues 396-426; the sequence is EKSQILFHGVLVCLITLVVNRFILPVAVTIL. The Cytoplasmic segment spans residues 427–612; the sequence is GLRDATSTKY…ICHTIVFTEE (186 aa). The tract at residues 598 to 678 is ion transport-like; the sequence is YFFFRICHTI…DFFSHAWNIF (81 aa). Residues 613–633 traverse the membrane as a helical segment; it reads FEHVGYLVILMNIFPFIISWI. Over 634 to 637 the chain is Extracellular; sequence SQLN. A helical transmembrane segment spans residues 638–664; sequence VIYHSELKHTNYCFLTLYILEALLKIA. Residues 665–671 lie on the Cytoplasmic side of the membrane; the sequence is AMRKDFF. The helical transmembrane segment at 672–696 threads the bilayer; that stretch reads SHAWNIFELAITLIGILHVILIEID. The Extracellular portion of the chain corresponds to 697-704; it reads TIKYIFNE. A helical membrane pass occupies residues 705–731; that stretch reads TEVIVFIKVVQFFRILRIFKLIAPKLL. Residues 732 to 1177 are Cytoplasmic-facing; it reads QIIDKRMSHQ…RINLRKVRKE (446 aa).

The protein belongs to the monovalent cation:proton antiporter 1 (CPA1) transporter (TC 2.A.36) family. Interacts with soluble adenylyl cyclase (sAC). In terms of tissue distribution, sperm.

It localises to the cell projection. The protein localises to the cilium. The protein resides in the flagellum membrane. Sperm-specific solute carrier involved in intracellular pH regulation of spermatozoa. Required for sperm motility and fertility. Involved in sperm cell hyperactivation, a step needed for sperm motility which is essential late in the preparation of sperm for fertilization. Required for the expression and bicarbonate regulation of the soluble adenylyl cyclase (sAC). The polypeptide is Solute carrier family 9 member C1 (SLC9C1) (Homo sapiens (Human)).